Here is a 501-residue protein sequence, read N- to C-terminus: UDP-N-acetylmuramoyl-L-alanyl-D-glutamate--2,6-diaminopimelate ligase (501 aa).

Ser29 lines the UDP-N-acetyl-alpha-D-muramoyl-L-alanyl-D-glutamate pocket. Residue 112–118 (GTNGKTS) participates in ATP binding. UDP-N-acetyl-alpha-D-muramoyl-L-alanyl-D-glutamate-binding positions include 161–162 (TT), Ser188, and Arg196. An N6-carboxylysine modification is found at Lys228. Meso-2,6-diaminopimelate is bound by residues Arg393, 417–420 (DNPR), Gly468, and Glu472. Positions 417–420 (DNPR) match the Meso-diaminopimelate recognition motif motif.

This sequence belongs to the MurCDEF family. MurE subfamily. Requires Mg(2+) as cofactor. Carboxylation is probably crucial for Mg(2+) binding and, consequently, for the gamma-phosphate positioning of ATP.

The protein localises to the cytoplasm. The catalysed reaction is UDP-N-acetyl-alpha-D-muramoyl-L-alanyl-D-glutamate + meso-2,6-diaminopimelate + ATP = UDP-N-acetyl-alpha-D-muramoyl-L-alanyl-gamma-D-glutamyl-meso-2,6-diaminopimelate + ADP + phosphate + H(+). It participates in cell wall biogenesis; peptidoglycan biosynthesis. Catalyzes the addition of meso-diaminopimelic acid to the nucleotide precursor UDP-N-acetylmuramoyl-L-alanyl-D-glutamate (UMAG) in the biosynthesis of bacterial cell-wall peptidoglycan. The chain is UDP-N-acetylmuramoyl-L-alanyl-D-glutamate--2,6-diaminopimelate ligase from Acidovorax sp. (strain JS42).